Here is a 411-residue protein sequence, read N- to C-terminus: Putative glycosyltransferase SCO3672 (411 aa).

Transmembrane regions (helical) follow at residues Ile7 to Leu27, Pro45 to Gly65, Val70 to Leu90, Glu120 to Phe140, Gly148 to Glu168, Leu169 to Leu189, Ile197 to Leu217, Gly227 to Leu247, Gly277 to His297, and Val301 to Leu321.

Belongs to the glycosyltransferase 4 family.

It is found in the cell membrane. In Streptomyces coelicolor (strain ATCC BAA-471 / A3(2) / M145), this protein is Putative glycosyltransferase SCO3672.